Consider the following 305-residue polypeptide: Homeobox protein ceh-23 (305 aa).

2 disordered regions span residues 113 to 140 (ASCP…ERRR) and 262 to 305 (RRSK…KVLN). The segment covering 120–135 (ASSQATVTLQVPSTGS) has biased composition (polar residues). A DNA-binding region (homeobox) is located at residues 211–270 (HRKARTIYGTTQTQQLEDMFKGQMYVVGAERENLAQRLGLSPSQVRIWFQNRRSKHRRKQ). Over residues 287–305 (GKDEEEDDEEDEDDVKVLN) the composition is skewed to acidic residues.

The protein belongs to the distal-less homeobox family.

It localises to the nucleus. In terms of biological role, probable transcription factor. Required for differentiation of AIY interneurons, acting downstream of LIM/homeobox protein ttx-3. Modulates gene expression, acting downstream of AMP kinase aak-2/AMPK signaling. Modulates lifespan. The protein is Homeobox protein ceh-23 (ceh-23) of Caenorhabditis elegans.